The chain runs to 191 residues: Adenine phosphoribosyltransferase 5 (191 aa).

This sequence belongs to the purine/pyrimidine phosphoribosyltransferase family. Homodimer.

The protein resides in the cytoplasm. It carries out the reaction AMP + diphosphate = 5-phospho-alpha-D-ribose 1-diphosphate + adenine. Its pathway is purine metabolism; AMP biosynthesis via salvage pathway; AMP from adenine: step 1/1. Its function is as follows. Catalyzes a salvage reaction resulting in the formation of AMP, that is energically less costly than de novo synthesis. May contribute to the recycling of adenine into adenylate nucleotides and the inactivation of cytokinins by phosphoribosylation. Possesses low activity toward adenine, but can efficiently convert cytokinins from free bases (active form) to the corresponding nucleotides (inactive form). The polypeptide is Adenine phosphoribosyltransferase 5 (APT5) (Arabidopsis thaliana (Mouse-ear cress)).